Here is a 677-residue protein sequence, read N- to C-terminus: Methionine--tRNA ligase (677 aa).

Positions 15 to 25 (PYANGSIHLGH) match the 'HIGH' region motif. Zn(2+) is bound by residues C146, C149, C159, and C162. The 'KMSKS' region motif lies at 333–337 (KMSKS). K336 contributes to the ATP binding site. The 103-residue stretch at 575 to 677 (DFAKIDLRVA…DGAKPGQQVK (103 aa)) folds into the tRNA-binding domain.

This sequence belongs to the class-I aminoacyl-tRNA synthetase family. MetG type 1 subfamily. In terms of assembly, homodimer. Zn(2+) is required as a cofactor.

The protein localises to the cytoplasm. It carries out the reaction tRNA(Met) + L-methionine + ATP = L-methionyl-tRNA(Met) + AMP + diphosphate. Its function is as follows. Is required not only for elongation of protein synthesis but also for the initiation of all mRNA translation through initiator tRNA(fMet) aminoacylation. The sequence is that of Methionine--tRNA ligase from Salmonella typhimurium (strain LT2 / SGSC1412 / ATCC 700720).